A 657-amino-acid polypeptide reads, in one-letter code: Glycogen debranching enzyme (657 aa).

Asp-336 functions as the Nucleophile in the catalytic mechanism. Residue Glu-371 is the Proton donor of the active site. A disordered region spans residues 460–479 (ANGEENRDGTNNNYSNNHGK).

This sequence belongs to the glycosyl hydrolase 13 family.

The enzyme catalyses Hydrolysis of (1-&gt;6)-alpha-D-glucosidic linkages to branches with degrees of polymerization of three or four glucose residues in limit dextrin.. It participates in glycan degradation; glycogen degradation. Functionally, removes maltotriose and maltotetraose chains that are attached by 1,6-alpha-linkage to the limit dextrin main chain, generating a debranched limit dextrin. The sequence is that of Glycogen debranching enzyme from Escherichia coli O17:K52:H18 (strain UMN026 / ExPEC).